The primary structure comprises 209 residues: Elongation factor Ts, chloroplastic (209 aa).

This sequence belongs to the EF-Ts family.

It localises to the plastid. The protein localises to the chloroplast. Associates with the EF-Tu.GDP complex and induces the exchange of GDP to GTP. It remains bound to the aminoacyl-tRNA.EF-Tu.GTP complex up to the GTP hydrolysis stage on the ribosome. The sequence is that of Elongation factor Ts, chloroplastic (tsf) from Cyanidioschyzon merolae (strain NIES-3377 / 10D) (Unicellular red alga).